A 66-amino-acid chain; its full sequence is MKAADVRALSADQLKEELAKLKKEQFNLRFQKATGQLEKSSRINEVRKDIARIKTIARQKAAEAKA.

Belongs to the universal ribosomal protein uL29 family.

The chain is Large ribosomal subunit protein uL29 from Rhizobium meliloti (strain 1021) (Ensifer meliloti).